The chain runs to 179 residues: Translation initiation factor IF-3 (179 aa).

Belongs to the IF-3 family. Monomer.

The protein localises to the cytoplasm. Functionally, IF-3 binds to the 30S ribosomal subunit and shifts the equilibrium between 70S ribosomes and their 50S and 30S subunits in favor of the free subunits, thus enhancing the availability of 30S subunits on which protein synthesis initiation begins. This is Translation initiation factor IF-3 from Bradyrhizobium diazoefficiens (strain JCM 10833 / BCRC 13528 / IAM 13628 / NBRC 14792 / USDA 110).